The following is a 163-amino-acid chain: Putative protein CASTOR3P (163 aa).

It belongs to the GATS family.

The protein is Putative protein CASTOR3P of Homo sapiens (Human).